The primary structure comprises 321 residues: Glucokinase (321 aa).

8 to 13 (GDVGGT) contacts ATP.

This sequence belongs to the bacterial glucokinase family.

The protein localises to the cytoplasm. The catalysed reaction is D-glucose + ATP = D-glucose 6-phosphate + ADP + H(+). The protein is Glucokinase of Salmonella agona (strain SL483).